Here is a 66-residue protein sequence, read N- to C-terminus: DNA gyrase inhibitor YacG (66 aa).

Residues Cys10, Cys13, Cys29, and Cys33 each coordinate Zn(2+).

The protein belongs to the DNA gyrase inhibitor YacG family. In terms of assembly, interacts with GyrB. Requires Zn(2+) as cofactor.

Functionally, inhibits all the catalytic activities of DNA gyrase by preventing its interaction with DNA. Acts by binding directly to the C-terminal domain of GyrB, which probably disrupts DNA binding by the gyrase. In Edwardsiella ictaluri (strain 93-146), this protein is DNA gyrase inhibitor YacG.